We begin with the raw amino-acid sequence, 469 residues long: UDP-glycosyltransferase 43 (469 aa).

Residues Ser280, 345–346 (WV), 363–371 (HCGWNSILE), and 385–388 (YSEQ) contribute to the UDP-alpha-D-glucose site.

It belongs to the UDP-glycosyltransferase family.

Its activity is regulated as follows. Inhibited by Cu(2+) or Zn(2+). Glycosyltransferase that catalyzes the C-glucosylation of daidzein to puerarin. Shows activity with the isoflavones daidzein and genistein, but has no activity towards flavonoids such as 2-hydroxynaringenin. Can use UDP-glucose, but not UDP-galactose or UDP-glucuronic acid as sugar donor. Does not require bivalent cations for activity. The sequence is that of UDP-glycosyltransferase 43 from Pueraria montana var. lobata (Kudzu vine).